Consider the following 160-residue polypeptide: Cytochrome b6-f complex subunit 4 (160 aa).

3 helical membrane passes run 36 to 56 (LLYI…GLAV), 95 to 115 (LLGV…PFLE), and 131 to 151 (TVFL…TLPI).

It belongs to the cytochrome b family. PetD subfamily. As to quaternary structure, the 4 large subunits of the cytochrome b6-f complex are cytochrome b6, subunit IV (17 kDa polypeptide, petD), cytochrome f and the Rieske protein, while the 4 small subunits are petG, petL, petM and petN. The complex functions as a dimer.

It localises to the plastid. It is found in the chloroplast thylakoid membrane. In terms of biological role, component of the cytochrome b6-f complex, which mediates electron transfer between photosystem II (PSII) and photosystem I (PSI), cyclic electron flow around PSI, and state transitions. This chain is Cytochrome b6-f complex subunit 4, found in Pisum sativum (Garden pea).